The following is a 2071-amino-acid chain: GTPase-activating protein BEM2 (2071 aa).

2 disordered regions span residues 1–115 (MPLK…QAHK) and 171–195 (AAPA…SERP). Composition is skewed to low complexity over residues 16–31 (PQSC…QSSC) and 42–55 (SSIS…SKNN). Residues 62–80 (SNGSVYSDETTLKTAQTHY) show a composition bias toward polar residues. A compositionally biased stretch (low complexity) spans 81–110 (TQQGQQAKPQQHTQQQQQQPQTPMQLQVPT). Polar residues predominate over residues 181–191 (HQPTASLSSIG). The region spanning 471–738 (DTEKVANQIH…MEMSLKMEPP (268 aa)) is the Ras-GEF domain. A compositionally biased stretch (polar residues) spans 787–811 (PSTKNNNSSQASNRISQLSVNSTPH). 3 disordered regions span residues 787–819 (PSTK…SSSA), 1645–1676 (RSVL…ARTS), and 1702–1738 (SVSS…GMGK). Composition is skewed to low complexity over residues 1656–1676 (SVSS…ARTS) and 1702–1726 (SVSS…ASPN). In terms of domain architecture, PH spans 1751–1853 (SGFTSSSSQY…WMKAITLSKR (103 aa)). One can recognise a Rho-GAP domain in the interval 1872-2070 (VPVEDVCERE…HLIRNPEHYF (199 aa)).

Functionally, GTPase-activating protein (GAP) for RHO proteins. Required for polarized growth and maintenance of cell polarity. This chain is GTPase-activating protein BEM2 (BEM2), found in Eremothecium gossypii (strain ATCC 10895 / CBS 109.51 / FGSC 9923 / NRRL Y-1056) (Yeast).